The sequence spans 1238 residues: DNA-directed RNA polymerase subunit beta (1238 aa).

The segment at 1186-1238 (IEGREDTPPEEVYEEGYEEGFEEESEELPEDIDFEPDSFDIENDDLDLEDFDI) is disordered. Over residues 1193–1238 (PPEEVYEEGYEEGFEEESEELPEDIDFEPDSFDIENDDLDLEDFDI) the composition is skewed to acidic residues.

The protein belongs to the RNA polymerase beta chain family. The RNAP catalytic core consists of 2 alpha, 1 beta, 1 beta' and 1 omega subunit. When a sigma factor is associated with the core the holoenzyme is formed, which can initiate transcription.

The catalysed reaction is RNA(n) + a ribonucleoside 5'-triphosphate = RNA(n+1) + diphosphate. Its function is as follows. DNA-dependent RNA polymerase catalyzes the transcription of DNA into RNA using the four ribonucleoside triphosphates as substrates. The polypeptide is DNA-directed RNA polymerase subunit beta (Thermoanaerobacter sp. (strain X514)).